We begin with the raw amino-acid sequence, 118 residues long: DNA-binding protein SSO0352 (118 aa).

This sequence belongs to the PDCD5 family.

This Saccharolobus solfataricus (strain ATCC 35092 / DSM 1617 / JCM 11322 / P2) (Sulfolobus solfataricus) protein is DNA-binding protein SSO0352.